We begin with the raw amino-acid sequence, 247 residues long: UPF0309 protein GWCH70_1414 (247 aa).

The 184-residue stretch at 31–214 (VSEAIQKGGI…VLMAENGFEP (184 aa)) folds into the SIS domain.

It belongs to the UPF0309 family.

This Geobacillus sp. (strain WCH70) protein is UPF0309 protein GWCH70_1414.